The sequence spans 95 residues: Acylphosphatase (95 aa).

An Acylphosphatase-like domain is found at 5–93; the sequence is RAHLYIKGKV…GEFQDFRILP (89 aa). Residues arginine 20 and asparagine 38 contribute to the active site.

Belongs to the acylphosphatase family.

The enzyme catalyses an acyl phosphate + H2O = a carboxylate + phosphate + H(+). The polypeptide is Acylphosphatase (acyP) (Pyrobaculum islandicum (strain DSM 4184 / JCM 9189 / GEO3)).